A 361-amino-acid polypeptide reads, in one-letter code: 24-methylenesterol C-methyltransferase 2 (361 aa).

It belongs to the class I-like SAM-binding methyltransferase superfamily. Erg6/SMT family.

The enzyme catalyses 24-methylidenelophenol + S-adenosyl-L-methionine = (Z)-24-ethylidenelophenol + S-adenosyl-L-homocysteine + H(+). Its pathway is steroid biosynthesis; sterol biosynthesis. Catalyzes the methyl transfer from S-adenosyl-methionine to the methylene group of 24-methylene lophenol to form 24-ethylidene lophenol. The sequence is that of 24-methylenesterol C-methyltransferase 2 (SMT2) from Arabidopsis thaliana (Mouse-ear cress).